A 666-amino-acid chain; its full sequence is Collagen alpha-1(XXV) chain (666 aa).

A disordered region spans residues 1-24 (MLVKKLAGKGGGRESGSEDPRPLG). The Cytoplasmic segment spans residues 1–33 (MLVKKLAGKGGGRESGSEDPRPLGQRCAGTMPS). A compositionally biased stretch (basic and acidic residues) spans 11–21 (GGRESGSEDPR). A helical; Signal-anchor for type II membrane protein membrane pass occupies residues 34–54 (CTALATLLSVVAVAFCFYLGV). Topologically, residues 55-666 (KTNDLQARIA…GLPMPGCWQK (612 aa)) are extracellular. The disordered stretch occupies residues 116 to 168 (LECNCPAGPPGKRGKRGRRGESGPPGQPGPQGPPGPKGDKGEQGDQGPRMVFP). One can recognise a Collagen-like 1 domain in the interval 121-164 (PAGPPGKRGKRGRRGESGPPGQPGPQGPPGPKGDKGEQGDQGPR). The span at 140 to 151 (PGQPGPQGPPGP) shows a compositional bias: pro residues. Residues 181–188 (LIKRRLIK) form an interaction with amyloid-beta peptide region. 2 disordered regions span residues 189 to 428 (GDQG…ATEI) and 445 to 666 (LTVT…CWQK). Collagen-like domains follow at residues 192 to 247 (GQAG…QKGS), 249 to 308 (GAPG…PGSS), 311 to 370 (GIKG…AGPP), 373 to 425 (GERG…DPGA), 455 to 514 (GPQG…KGEK), 529 to 588 (GPPG…KGAM), and 589 to 648 (GEPG…DGLD). A compositionally biased stretch (pro residues) spans 196 to 208 (PPGPPGPPGPRGP). Low complexity predominate over residues 230–245 (PGEQGLMGPLGPPGQK). Residues 280–290 (EPGKEGEKGDA) show a composition bias toward basic and acidic residues. Over residues 336–358 (LPGIKGEPGFIGPQGEPGLPGLP) the composition is skewed to low complexity. 2 stretches are compositionally biased toward basic and acidic residues: residues 361–377 (KGDR…ERGD) and 398–407 (SKGDRGDKGD). Positions 457–466 (QGLQGPKGEQ) are enriched in low complexity. Residues 494 to 503 (GEKGGLGLPG) are compositionally biased toward gly residues. Positions 528–543 (IGPPGPPGPHGPPGPM) are enriched in pro residues. Positions 615–638 (RGEKGDLGEKGEKGFRGVKGEKGE) are enriched in basic and acidic residues.

Forms homodimers and homotrimers. Binds to the fibrillized forms of amyloid-beta protein 40 (beta-APP40) and amyloid-betad protein 42 (beta-APP42). Found associated with beta-APP42 more frequently than with beta-APP40. Post-translationally, undergoes proteolytic cleavage by furin protease to yield the soluble collagen-like Alzheimer amyloid plaque component. In terms of processing, glycosylated. Hydroxylated on proline and lysine residues. Expressed predominantly in neurons with low levels also detected in heart, testis and eye.

The protein localises to the membrane. Inhibits fibrillization of amyloid-beta peptide during the elongation phase. Has also been shown to assemble amyloid fibrils into protease-resistant aggregates. Binds heparin. The protein is Collagen alpha-1(XXV) chain of Mus musculus (Mouse).